Consider the following 102-residue polypeptide: MQNQKIRIRLKAFDYKLIDQSALEIVETAKRTGAVVKGPVPLPTSIERFDVLRSPHVNKSSRDQFEIRTHRRLMDIMDPTDKTVDALMKLDLPAGVDVEIKL.

The protein belongs to the universal ribosomal protein uS10 family. Part of the 30S ribosomal subunit.

Involved in the binding of tRNA to the ribosomes. This chain is Small ribosomal subunit protein uS10, found in Thiobacillus denitrificans (strain ATCC 25259 / T1).